The chain runs to 344 residues: Anthranilate phosphoribosyltransferase (344 aa).

5-phospho-alpha-D-ribose 1-diphosphate-binding positions include G79, 82 to 83 (GD), T87, 89 to 92 (NIST), 107 to 115 (KHGNRSVSS), and S119. G79 contacts anthranilate. S91 is a Mg(2+) binding site. N110 lines the anthranilate pocket. R165 serves as a coordination point for anthranilate. Mg(2+) contacts are provided by D224 and E225.

It belongs to the anthranilate phosphoribosyltransferase family. In terms of assembly, homodimer. Mg(2+) is required as a cofactor.

The catalysed reaction is N-(5-phospho-beta-D-ribosyl)anthranilate + diphosphate = 5-phospho-alpha-D-ribose 1-diphosphate + anthranilate. It participates in amino-acid biosynthesis; L-tryptophan biosynthesis; L-tryptophan from chorismate: step 2/5. In terms of biological role, catalyzes the transfer of the phosphoribosyl group of 5-phosphorylribose-1-pyrophosphate (PRPP) to anthranilate to yield N-(5'-phosphoribosyl)-anthranilate (PRA). In Salinibacter ruber (strain DSM 13855 / M31), this protein is Anthranilate phosphoribosyltransferase.